Reading from the N-terminus, the 138-residue chain is Regulator of ribonuclease activity B (138 aa).

A disordered region spans residues 111–138 (WGTYFEDPNGEEGDDDDYVDEDDDGVRH). Positions 118–138 (PNGEEGDDDDYVDEDDDGVRH) are enriched in acidic residues.

The protein belongs to the RraB family. As to quaternary structure, interacts with the C-terminal region of Rne.

The protein resides in the cytoplasm. In terms of biological role, globally modulates RNA abundance by binding to RNase E (Rne) and regulating its endonucleolytic activity. Can modulate Rne action in a substrate-dependent manner by altering the composition of the degradosome. This chain is Regulator of ribonuclease activity B, found in Salmonella typhi.